Here is a 1325-residue protein sequence, read N- to C-terminus: Nephrocystin-3 (1325 aa).

Positions 1–20 (MGTASSLVSPTGGEVIEDTY) are disordered. The N-myristoyl glycine moiety is linked to residue G2. Residues 107–203 (SMGRREAKLD…QRLQAQGIQV (97 aa)) adopt a coiled-coil conformation. 11 TPR repeats span residues 467 to 500 (TPEEDDFGDVLWDIHDEQEQMEAFQQTSSSAHEL), 881 to 914 (CLLNLLVAQNLYKRGHFAELLSYWQFVGKDKGAM), 916 to 937 (TEYFESLKQYENSEGEENMLCL), 938 to 971 (ADLYETLGRFLKDLGLLSQAVVPLQRSLEIRETA), 980 to 1013 (AQSLHQLAGVYVQWKKFGDAEQLYKQALEISENA), 1022 to 1055 (ARELEALATLYHKQNKYEQAEHFRKKSVIIRQQA), 1088 to 1121 (ARTLNELGVLYFLQNNLETAEQFLKRSLEMRERV), 1130 to 1163 (AQSLNNLAALCNEKKQYEKAEELYERALDIRRRA), 1172 to 1205 (AYTVKHLAILYKKTGKVDKAVPLYELAVEIRQKS), 1214 to 1247 (ATALVNLAVLHSQMKKHSEALPLYERALKIYEDS), and 1256 to 1289 (GETLKNLAVLSYEEGNFEKAAELYKRAMEIKEAE). Positions 1293-1325 (LGGKAPSRQSSSGDTFLFKTTHSPNVFLPQGQS) are disordered. The span at 1299–1325 (SRQSSSGDTFLFKTTHSPNVFLPQGQS) shows a compositional bias: polar residues.

In terms of assembly, interacts with NPHP1 and INVS/NPHP2. Interacts (when myristoylated) with UNC119 and UNC119B; interaction is required for localization to cilium. Interacts with CEP164. Component of a complex containing at least ANKS6, INVS, NEK8 and NPHP3. ANKS6 may organize complex assembly by linking INVS and NPHP3 to NEK8 and INVS may target the complex to the proximal ciliary axoneme.

The protein localises to the cell projection. It is found in the cilium. Its function is as follows. Required for normal ciliary development and function. Inhibits disheveled-1-induced canonical Wnt-signaling activity and may also play a role in the control of non-canonical Wnt signaling that regulates planar cell polarity. Probably acts as a molecular switch between different Wnt signaling pathways. Required for proper convergent extension cell movements. The sequence is that of Nephrocystin-3 (Nphp3) from Mus musculus (Mouse).